The chain runs to 1410 residues: DNA-directed RNA polymerase subunit beta' (1410 aa).

Zn(2+) is bound by residues C69, C71, C84, and C87. Mg(2+)-binding residues include D461, D463, and D465. C810, C884, C891, and C894 together coordinate Zn(2+).

This sequence belongs to the RNA polymerase beta' chain family. In terms of assembly, the RNAP catalytic core consists of 2 alpha, 1 beta, 1 beta' and 1 omega subunit. When a sigma factor is associated with the core the holoenzyme is formed, which can initiate transcription. Mg(2+) serves as cofactor. It depends on Zn(2+) as a cofactor.

It catalyses the reaction RNA(n) + a ribonucleoside 5'-triphosphate = RNA(n+1) + diphosphate. Functionally, DNA-dependent RNA polymerase catalyzes the transcription of DNA into RNA using the four ribonucleoside triphosphates as substrates. The protein is DNA-directed RNA polymerase subunit beta' of Ehrlichia chaffeensis (strain ATCC CRL-10679 / Arkansas).